Here is a 113-residue protein sequence, read N- to C-terminus: DNA-binding protein Mevan_1162 (113 aa).

Over residues 1-12 (MDPEEIKQKKLQ) the composition is skewed to basic and acidic residues. Residues 1–22 (MDPEEIKQKKLQEMQAKAQDPE) form a disordered region.

This sequence belongs to the PDCD5 family.

In Methanococcus vannielii (strain ATCC 35089 / DSM 1224 / JCM 13029 / OCM 148 / SB), this protein is DNA-binding protein Mevan_1162.